Here is a 634-residue protein sequence, read N- to C-terminus: DNA-directed RNA polymerase subunit gamma (634 aa).

4 residues coordinate Zn(2+): Cys74, Cys76, Cys89, and Cys92. Mg(2+)-binding residues include Asp471, Asp473, and Asp475.

Belongs to the RNA polymerase beta' chain family. RpoC1 subfamily. In cyanobacteria the RNAP catalytic core is composed of 2 alpha, 1 beta, 1 beta', 1 gamma and 1 omega subunit. When a sigma factor is associated with the core the holoenzyme is formed, which can initiate transcription. Requires Mg(2+) as cofactor. The cofactor is Zn(2+).

The enzyme catalyses RNA(n) + a ribonucleoside 5'-triphosphate = RNA(n+1) + diphosphate. Functionally, DNA-dependent RNA polymerase catalyzes the transcription of DNA into RNA using the four ribonucleoside triphosphates as substrates. This is DNA-directed RNA polymerase subunit gamma from Synechococcus sp. (strain CC9605).